Consider the following 150-residue polypeptide: UPF0756 membrane protein A1S_2121 (150 aa).

The next 4 helical transmembrane spans lie at 22–42 (SQNA…ITPL), 45–65 (FFPY…TIGV), 83–103 (FISF…WLGG), and 115–135 (VVAG…GVPV).

This sequence belongs to the UPF0756 family.

The protein resides in the cell membrane. In Acinetobacter baumannii (strain ATCC 17978 / DSM 105126 / CIP 53.77 / LMG 1025 / NCDC KC755 / 5377), this protein is UPF0756 membrane protein A1S_2121.